Consider the following 507-residue polypeptide: ATP synthase subunit alpha, chloroplastic (507 aa).

170 to 177 (GDRQTGKT) lines the ATP pocket.

This sequence belongs to the ATPase alpha/beta chains family. In terms of assembly, F-type ATPases have 2 components, CF(1) - the catalytic core - and CF(0) - the membrane proton channel. CF(1) has five subunits: alpha(3), beta(3), gamma(1), delta(1), epsilon(1). CF(0) has four main subunits: a, b, b' and c.

The protein resides in the plastid. The protein localises to the chloroplast thylakoid membrane. The catalysed reaction is ATP + H2O + 4 H(+)(in) = ADP + phosphate + 5 H(+)(out). Functionally, produces ATP from ADP in the presence of a proton gradient across the membrane. The alpha chain is a regulatory subunit. The sequence is that of ATP synthase subunit alpha, chloroplastic from Illicium oligandrum (Star anise).